A 420-amino-acid chain; its full sequence is Glutamyl-tRNA reductase (420 aa).

Residues 49–52 (TCNR), Ser109, 114–116 (EPQ), and Gln120 contribute to the substrate site. Cys50 serves as the catalytic Nucleophile. Position 189-194 (189-194 (GAGETI)) interacts with NADP(+).

This sequence belongs to the glutamyl-tRNA reductase family. Homodimer.

The enzyme catalyses (S)-4-amino-5-oxopentanoate + tRNA(Glu) + NADP(+) = L-glutamyl-tRNA(Glu) + NADPH + H(+). The protein operates within porphyrin-containing compound metabolism; protoporphyrin-IX biosynthesis; 5-aminolevulinate from L-glutamyl-tRNA(Glu): step 1/2. Its function is as follows. Catalyzes the NADPH-dependent reduction of glutamyl-tRNA(Glu) to glutamate 1-semialdehyde (GSA). The sequence is that of Glutamyl-tRNA reductase from Yersinia pseudotuberculosis serotype O:1b (strain IP 31758).